A 232-amino-acid chain; its full sequence is 7-cyano-7-deazaguanine synthase (232 aa).

An ATP-binding site is contributed by 8-18; it reads FSGGQDSTTCL. Zn(2+) is bound by residues cysteine 187, cysteine 196, cysteine 199, and cysteine 202.

This sequence belongs to the QueC family. Zn(2+) is required as a cofactor.

The enzyme catalyses 7-carboxy-7-deazaguanine + NH4(+) + ATP = 7-cyano-7-deazaguanine + ADP + phosphate + H2O + H(+). It functions in the pathway purine metabolism; 7-cyano-7-deazaguanine biosynthesis. In terms of biological role, catalyzes the ATP-dependent conversion of 7-carboxy-7-deazaguanine (CDG) to 7-cyano-7-deazaguanine (preQ(0)). This Photobacterium profundum (strain SS9) protein is 7-cyano-7-deazaguanine synthase.